The chain runs to 298 residues: Small ribosomal subunit protein uS2 (298 aa).

The protein belongs to the universal ribosomal protein uS2 family.

This Leifsonia xyli subsp. xyli (strain CTCB07) protein is Small ribosomal subunit protein uS2.